The chain runs to 361 residues: Ribosomal RNA large subunit methyltransferase M (361 aa).

Residues serine 187, 220–223 (CPGG), aspartate 239, aspartate 259, and aspartate 276 each bind S-adenosyl-L-methionine. Catalysis depends on lysine 305, which acts as the Proton acceptor.

Belongs to the class I-like SAM-binding methyltransferase superfamily. RNA methyltransferase RlmE family. RlmM subfamily. As to quaternary structure, monomer.

Its subcellular location is the cytoplasm. It catalyses the reaction cytidine(2498) in 23S rRNA + S-adenosyl-L-methionine = 2'-O-methylcytidine(2498) in 23S rRNA + S-adenosyl-L-homocysteine + H(+). Its function is as follows. Catalyzes the 2'-O-methylation at nucleotide C2498 in 23S rRNA. The polypeptide is Ribosomal RNA large subunit methyltransferase M (Shewanella sp. (strain W3-18-1)).